The following is a 282-amino-acid chain: ATP phosphoribosyltransferase (282 aa).

The protein belongs to the ATP phosphoribosyltransferase family. Long subfamily. The cofactor is Mg(2+).

The protein localises to the cytoplasm. It catalyses the reaction 1-(5-phospho-beta-D-ribosyl)-ATP + diphosphate = 5-phospho-alpha-D-ribose 1-diphosphate + ATP. Its pathway is amino-acid biosynthesis; L-histidine biosynthesis; L-histidine from 5-phospho-alpha-D-ribose 1-diphosphate: step 1/9. With respect to regulation, feedback inhibited by histidine. In terms of biological role, catalyzes the condensation of ATP and 5-phosphoribose 1-diphosphate to form N'-(5'-phosphoribosyl)-ATP (PR-ATP). Has a crucial role in the pathway because the rate of histidine biosynthesis seems to be controlled primarily by regulation of HisG enzymatic activity. This Pyrobaculum neutrophilum (strain DSM 2338 / JCM 9278 / NBRC 100436 / V24Sta) (Thermoproteus neutrophilus) protein is ATP phosphoribosyltransferase.